We begin with the raw amino-acid sequence, 708 residues long: Leukotoxin translocation ATP-binding protein LktB (708 aa).

The Peptidase C39 domain maps to 1-126; it reads MEANHQRNDL…ACYQGQLILV (126 aa). One can recognise an ABC transmembrane type-1 domain in the interval 155 to 437; that stretch reads FLETLIVSIF…LAQLWQDFQQ (283 aa). The next 5 helical transmembrane spans lie at 159 to 179, 192 to 212, 270 to 290, 296 to 316, and 389 to 409; these read LIVS…FQVV, LNII…LSGL, ALTS…MWYY, LVIL…SPIL, and VMVI…LSIG. Positions 469-704 constitute an ABC transporter domain; it reads ISFKNIRFRY…SNGLYSYLHQ (236 aa). 503–510 provides a ligand contact to ATP; the sequence is GRSGSGKS.

This sequence belongs to the ABC transporter superfamily. Protein-1 exporter (TC 3.A.1.109) family. Homodimer.

It is found in the cell inner membrane. It carries out the reaction ATP + H2O + proteinSide 1 = ADP + phosphate + proteinSide 2.. Part of the ABC transporter complex LktBD involved in leukotoxin export. Transmembrane domains (TMD) form a pore in the inner membrane and the ATP-binding domain (NBD) is responsible for energy generation. This chain is Leukotoxin translocation ATP-binding protein LktB (lktB), found in Bibersteinia trehalosi (Pasteurella trehalosi).